We begin with the raw amino-acid sequence, 233 residues long: Cilia- and flagella-associated protein 299 (233 aa).

The protein resides in the cytoplasm. Its subcellular location is the nucleus. In terms of biological role, may be involved in spermatogenesis. The protein is Cilia- and flagella-associated protein 299 of Xenopus laevis (African clawed frog).